We begin with the raw amino-acid sequence, 222 residues long: MGQKVHPKGFRLGIIRDWDSRWFANDKDFEKYVLEDYKIRRHIKEKLYNAGISRIEIERAAKRVKVIIHTAKPGIVIGRAGSGVEALRKELEKLTGGKTISLDIKEIKVPELDAQLVAENIAAQLEKRVSFRKAMKQAMARALRSGAKGIKTMVSGRLGGADIARTEWYKEGRIPLQTLRADIDYGFAEAHTTYGRIGVKTWIYKGDILPQKAAASEKGGDK.

Residues 39 to 108 (IRRHIKEKLY…TISLDIKEIK (70 aa)) enclose the KH type-2 domain.

Belongs to the universal ribosomal protein uS3 family. As to quaternary structure, part of the 30S ribosomal subunit. Forms a tight complex with proteins S10 and S14.

Functionally, binds the lower part of the 30S subunit head. Binds mRNA in the 70S ribosome, positioning it for translation. In Caldicellulosiruptor bescii (strain ATCC BAA-1888 / DSM 6725 / KCTC 15123 / Z-1320) (Anaerocellum thermophilum), this protein is Small ribosomal subunit protein uS3.